The primary structure comprises 401 residues: SVP1-like protein 2 (401 aa).

WD repeat units follow at residues 222 to 262 (AHKN…LIHE) and 267 to 306 (LDRA…DKRH).

Belongs to the WD repeat PROPPIN family.

Its subcellular location is the vacuole membrane. The protein resides in the cytoplasmic vesicle membrane. Functionally, involved in mitochondrial or peroxisomal functions and amino acid signaling pathways. The sequence is that of SVP1-like protein 2 (HSV2) from Eremothecium gossypii (strain ATCC 10895 / CBS 109.51 / FGSC 9923 / NRRL Y-1056) (Yeast).